The primary structure comprises 53 residues: Rubredoxin (53 aa).

A Rubredoxin-like domain is found at 1 to 52 (MAKWRCKICGYIYDEDEGDPDNGISPGTKFEDLPDDWVCPLCGAPKSEFERI). Fe cation is bound by residues Cys6, Cys9, Cys39, and Cys42.

It belongs to the rubredoxin family. The cofactor is Fe(3+).

Functionally, rubredoxin is a small nonheme, iron protein lacking acid-labile sulfide. Its single Fe, chelated to 4 Cys, functions as an electron acceptor and may also stabilize the conformation of the molecule. The protein is Rubredoxin (rub) of Pyrococcus abyssi (strain GE5 / Orsay).